Consider the following 310-residue polypeptide: Cysteine synthase (310 aa).

K46 carries the post-translational modification N6-(pyridoxal phosphate)lysine. Pyridoxal 5'-phosphate-binding positions include N76, 180-184, and S268; that span reads GTGGT.

Belongs to the cysteine synthase/cystathionine beta-synthase family. As to quaternary structure, homodimer. Pyridoxal 5'-phosphate serves as cofactor.

The enzyme catalyses O-acetyl-L-serine + hydrogen sulfide = L-cysteine + acetate. It functions in the pathway amino-acid biosynthesis; L-cysteine biosynthesis; L-cysteine from L-serine: step 2/2. This Staphylococcus aureus (strain Mu50 / ATCC 700699) protein is Cysteine synthase (cysK).